A 116-amino-acid polypeptide reads, in one-letter code: Small ribosomal subunit protein bS16 (116 aa).

The segment at 88-116 (RNNPKAAVPGKRMAELAKKKADRAAASAE) is disordered. The segment covering 99 to 110 (RMAELAKKKADR) has biased composition (basic and acidic residues).

The protein belongs to the bacterial ribosomal protein bS16 family.

In Cereibacter sphaeroides (strain ATCC 17029 / ATH 2.4.9) (Rhodobacter sphaeroides), this protein is Small ribosomal subunit protein bS16.